Consider the following 575-residue polypeptide: Septation ring formation regulator EzrA (575 aa).

At 1-8 (MSNGQLIY) the chain is on the extracellular side. The helical transmembrane segment at 9 to 27 (LMVAIAVILVLAYVVAIFL) threads the bilayer. The Cytoplasmic segment spans residues 28 to 575 (RKRNEGRLEA…YEKTRETIRF (548 aa)). 4 coiled-coil regions span residues 110-191 (QIDQ…FVTL), 265-301 (LYEA…LYDI), 354-416 (VRRI…IEKD), and 456-526 (TASN…IQEA).

Belongs to the EzrA family.

The protein localises to the cell membrane. Negative regulator of FtsZ ring formation; modulates the frequency and position of FtsZ ring formation. Inhibits FtsZ ring formation at polar sites. Interacts either with FtsZ or with one of its binding partners to promote depolymerization. This is Septation ring formation regulator EzrA from Streptococcus pneumoniae (strain JJA).